We begin with the raw amino-acid sequence, 296 residues long: Giardin subunit alpha-4 (296 aa).

Annexin repeat units lie at residues 3-72 (ATVS…VHAW), 74-146 (SRFE…GWVK), 153-223 (KSIK…AHHW), and 226-294 (DPGQ…VFWR).

The protein belongs to the annexin family. Giardin subunit alpha subfamily.

It localises to the cytoplasm. Its subcellular location is the cytoskeleton. Functionally, giardins are involved in parasite attachment to the intestinal mucosa and in the cytoskeletal disassembly and reassembly that marks the transition from infectious trophozoite to transmissible cyst. They may interact with other cytoskeletal proteins such as microtubules in the microribbons or crossbridges, to maintain the integrity of the ventral disk. This Giardia intestinalis (Giardia lamblia) protein is Giardin subunit alpha-4.